We begin with the raw amino-acid sequence, 201 residues long: Small ribosomal subunit protein uS4c (201 aa).

One can recognise an S4 RNA-binding domain in the interval 89-150 (MRLDNILFRL…KQRSKVLIQN (62 aa)).

This sequence belongs to the universal ribosomal protein uS4 family. In terms of assembly, part of the 30S ribosomal subunit. Contacts protein S5. The interaction surface between S4 and S5 is involved in control of translational fidelity.

The protein localises to the plastid. It is found in the chloroplast. In terms of biological role, one of the primary rRNA binding proteins, it binds directly to 16S rRNA where it nucleates assembly of the body of the 30S subunit. With S5 and S12 plays an important role in translational accuracy. This is Small ribosomal subunit protein uS4c (rps4) from Acorus calamus (Sweet flag).